The sequence spans 501 residues: MTNHSVILCILDGWGNNKNSQFNAIAQADTPYWDSIISQYPQSNIVTHGPDVGLPDRQIGNSEVGHISLGSGRIVLQDLCRINEEIKNIRKNTHLLEFTEQIKRNNGICHIAGLLSDGGIHSSLSHMLDIIDALSYLKIQVVIHIFLDGRDTPPISALKYINILCSHIKDLSNVSIATISGRYYSMDRDNRLDRTTKAYNSIAFGHGKRYEDPISAVQDNYNAGITDEFIIPCVIGNYQGMNPTDGFIMTNFRSDRVIQILKMITEDQNTNHITLKNTIGMIKYSNELNIPCLFPNKKISNTLGEIISNQQLHQLRIAETEKYAHVTFFFNGGREEVFENEERIIIPSPSVTTYDLVPEMSAYEITDTLIKKINLQKYSLIIINYANADMVGHTGNIEATKKAITTLDQCLGKILKCIHNTNYILVITADHGNAEEMFDVQNNMPYTAHTLNPVPFVVCNYPKKIKLKNGRLSDVAPTILEILNIKQPEEMTGISLIDTSN.

Mn(2+)-binding residues include aspartate 12 and serine 62. Serine 62 serves as the catalytic Phosphoserine intermediate. Substrate contacts are provided by residues histidine 121, 150–151, arginine 182, arginine 188, 253–256, and lysine 322; these read RD and RSDR. Residues aspartate 389, histidine 393, aspartate 430, histidine 431, and histidine 449 each coordinate Mn(2+).

It belongs to the BPG-independent phosphoglycerate mutase family. Monomer. It depends on Mn(2+) as a cofactor.

The enzyme catalyses (2R)-2-phosphoglycerate = (2R)-3-phosphoglycerate. Its pathway is carbohydrate degradation; glycolysis; pyruvate from D-glyceraldehyde 3-phosphate: step 3/5. In terms of biological role, catalyzes the interconversion of 2-phosphoglycerate and 3-phosphoglycerate. The sequence is that of 2,3-bisphosphoglycerate-independent phosphoglycerate mutase from Ehrlichia ruminantium (strain Welgevonden).